Consider the following 367-residue polypeptide: DNA polymerase IV (367 aa).

The region spanning 14–198 (IIHIDMDAFF…LPIEKFHGVG (185 aa)) is the UmuC domain. Mg(2+)-binding residues include aspartate 18 and aspartate 116. Residue glutamate 117 is part of the active site.

This sequence belongs to the DNA polymerase type-Y family. In terms of assembly, monomer. It depends on Mg(2+) as a cofactor.

The protein resides in the cytoplasm. It carries out the reaction DNA(n) + a 2'-deoxyribonucleoside 5'-triphosphate = DNA(n+1) + diphosphate. Poorly processive, error-prone DNA polymerase involved in untargeted mutagenesis. Copies undamaged DNA at stalled replication forks, which arise in vivo from mismatched or misaligned primer ends. These misaligned primers can be extended by PolIV. Exhibits no 3'-5' exonuclease (proofreading) activity. May be involved in translesional synthesis, in conjunction with the beta clamp from PolIII. In Streptococcus thermophilus (strain CNRZ 1066), this protein is DNA polymerase IV.